We begin with the raw amino-acid sequence, 455 residues long: 1,4-beta-D-glucan cellobiohydrolase C (455 aa).

Residues 1 to 19 form the signal peptide; that stretch reads MHYSASGLALAFLLPAIQA. Residues 20–55 enclose the CBM1 domain; it reads QQTLYGQCGGSGWTGATSCVAGAACSTLNQWYAQCL. 2 disulfides stabilise this stretch: Cys-27/Cys-44 and Cys-38/Cys-54. The segment at 59–92 is thr-rich linker; that stretch reads TTTSTTLTTTTSSVTTTSNPGSTTTTSSVTVTAT. Residues 66-86 are disordered; it reads TTTTSSVTTTSNPGSTTTTSS. The tract at residues 93 to 450 is catalytic; it reads ASGNPFSGYQ…QAYFVQLLQN (358 aa). The active site involves Asp-185. 2 disulfide bridges follow: Cys-186–Cys-245 and Cys-377–Cys-424. Catalysis depends on Asp-231, which acts as the Proton donor. Asp-410 functions as the Nucleophile in the catalytic mechanism.

This sequence belongs to the glycosyl hydrolase 6 (cellulase B) family.

It localises to the secreted. The catalysed reaction is Hydrolysis of (1-&gt;4)-beta-D-glucosidic linkages in cellulose and cellotetraose, releasing cellobiose from the non-reducing ends of the chains.. The biological conversion of cellulose to glucose generally requires three types of hydrolytic enzymes: (1) Endoglucanases which cut internal beta-1,4-glucosidic bonds; (2) Exocellobiohydrolases that cut the disaccharide cellobiose from the non-reducing end of the cellulose polymer chain; (3) Beta-1,4-glucosidases which hydrolyze the cellobiose and other short cello-oligosaccharides to glucose. Active against carboxymethylcellulose, beta-glucan and lichenan. This chain is 1,4-beta-D-glucan cellobiohydrolase C (cbhC), found in Emericella nidulans (strain FGSC A4 / ATCC 38163 / CBS 112.46 / NRRL 194 / M139) (Aspergillus nidulans).